The primary structure comprises 277 residues: Tryptophan synthase alpha chain (277 aa).

Active-site proton acceptor residues include glutamate 42 and glutamate 53.

The protein belongs to the TrpA family. In terms of assembly, tetramer of two alpha and two beta chains.

The enzyme catalyses (1S,2R)-1-C-(indol-3-yl)glycerol 3-phosphate + L-serine = D-glyceraldehyde 3-phosphate + L-tryptophan + H2O. Its pathway is amino-acid biosynthesis; L-tryptophan biosynthesis; L-tryptophan from chorismate: step 5/5. Functionally, the alpha subunit is responsible for the aldol cleavage of indoleglycerol phosphate to indole and glyceraldehyde 3-phosphate. The polypeptide is Tryptophan synthase alpha chain (Natronomonas pharaonis (strain ATCC 35678 / DSM 2160 / CIP 103997 / JCM 8858 / NBRC 14720 / NCIMB 2260 / Gabara) (Halobacterium pharaonis)).